Reading from the N-terminus, the 366-residue chain is tRNA/tmRNA (uracil-C(5))-methyltransferase (366 aa).

Gln-190, Tyr-218, Asn-223, Glu-239, and Asp-299 together coordinate S-adenosyl-L-methionine. Residue Cys-324 is the Nucleophile of the active site. Catalysis depends on Glu-358, which acts as the Proton acceptor.

Belongs to the class I-like SAM-binding methyltransferase superfamily. RNA M5U methyltransferase family. TrmA subfamily.

The catalysed reaction is uridine(54) in tRNA + S-adenosyl-L-methionine = 5-methyluridine(54) in tRNA + S-adenosyl-L-homocysteine + H(+). It catalyses the reaction uridine(341) in tmRNA + S-adenosyl-L-methionine = 5-methyluridine(341) in tmRNA + S-adenosyl-L-homocysteine + H(+). Functionally, dual-specificity methyltransferase that catalyzes the formation of 5-methyluridine at position 54 (m5U54) in all tRNAs, and that of position 341 (m5U341) in tmRNA (transfer-mRNA). The chain is tRNA/tmRNA (uracil-C(5))-methyltransferase from Edwardsiella ictaluri (strain 93-146).